The sequence spans 242 residues: ATP synthase subunit a (242 aa).

6 consecutive transmembrane segments (helical) span residues 29–49 (SAVA…TAFV), 84–104 (FFPL…LGMV), 114–134 (IIVT…YGIY), 140–160 (FFSL…MVII), 181–201 (VAGH…TWLF), and 206–226 (IALV…QAYI).

The protein belongs to the ATPase A chain family. In terms of assembly, F-type ATPases have 2 components, CF(1) - the catalytic core - and CF(0) - the membrane proton channel. CF(1) has five subunits: alpha(3), beta(3), gamma(1), delta(1), epsilon(1). CF(0) has three main subunits: a(1), b(2) and c(9-12). The alpha and beta chains form an alternating ring which encloses part of the gamma chain. CF(1) is attached to CF(0) by a central stalk formed by the gamma and epsilon chains, while a peripheral stalk is formed by the delta and b chains.

It is found in the cell inner membrane. Functionally, key component of the proton channel; it plays a direct role in the translocation of protons across the membrane. The polypeptide is ATP synthase subunit a (Orientia tsutsugamushi (strain Ikeda) (Rickettsia tsutsugamushi)).